A 200-amino-acid chain; its full sequence is HTH-type transcriptional regulator Hpr (200 aa).

The region spanning 13–157 (AMLFSQRIAQ…MMCIVRNIYG (145 aa)) is the HTH marR-type domain. A DNA-binding region (H-T-H motif) is located at residues 63–86 (ISEIAKFGVMHVSTAFNFSKKLEE).

As to quaternary structure, homodimer.

Negative regulator of protease production and sporulation. The chain is HTH-type transcriptional regulator Hpr from Geobacillus thermodenitrificans (strain NG80-2).